A 210-amino-acid chain; its full sequence is Uracil phosphoribosyltransferase (210 aa).

Residues R77, R102, and 129 to 137 contribute to the 5-phospho-alpha-D-ribose 1-diphosphate site; that span reads DPMLATGAS. Residues I195 and 200 to 202 contribute to the uracil site; that span reads GDA. D201 provides a ligand contact to 5-phospho-alpha-D-ribose 1-diphosphate.

The protein belongs to the UPRTase family. Requires Mg(2+) as cofactor.

It carries out the reaction UMP + diphosphate = 5-phospho-alpha-D-ribose 1-diphosphate + uracil. It functions in the pathway pyrimidine metabolism; UMP biosynthesis via salvage pathway; UMP from uracil: step 1/1. Its activity is regulated as follows. Allosterically activated by GTP. In terms of biological role, catalyzes the conversion of uracil and 5-phospho-alpha-D-ribose 1-diphosphate (PRPP) to UMP and diphosphate. The protein is Uracil phosphoribosyltransferase of Mycoplasmoides gallisepticum (strain R(low / passage 15 / clone 2)) (Mycoplasma gallisepticum).